Consider the following 172-residue polypeptide: Adenine phosphoribosyltransferase (172 aa).

The protein belongs to the purine/pyrimidine phosphoribosyltransferase family. As to quaternary structure, homodimer.

It localises to the cytoplasm. The enzyme catalyses AMP + diphosphate = 5-phospho-alpha-D-ribose 1-diphosphate + adenine. Its pathway is purine metabolism; AMP biosynthesis via salvage pathway; AMP from adenine: step 1/1. Functionally, catalyzes a salvage reaction resulting in the formation of AMP, that is energically less costly than de novo synthesis. The protein is Adenine phosphoribosyltransferase of Clostridium novyi (strain NT).